We begin with the raw amino-acid sequence, 41 residues long: uncharacterized protein (41 aa).

A helical transmembrane segment spans residues 10–32 (LIILAVPFMIKTSLKTNLIFFFL).

It localises to the cell inner membrane. This is an uncharacterized protein from Escherichia coli (strain K12).